The chain runs to 263 residues: Shikimate dehydrogenase (NADP(+)) (263 aa).

Shikimate contacts are provided by residues 21–23 (TLS) and Thr67. Lys71 acts as the Proton acceptor in catalysis. Glu83 contributes to the NADP(+) binding site. Positions 92 and 103 each coordinate shikimate. NADP(+) is bound by residues 126-130 (GAGGA) and Leu204. A shikimate-binding site is contributed by Tyr206. Gly227 is a binding site for NADP(+).

It belongs to the shikimate dehydrogenase family. Homodimer.

The enzyme catalyses shikimate + NADP(+) = 3-dehydroshikimate + NADPH + H(+). Its pathway is metabolic intermediate biosynthesis; chorismate biosynthesis; chorismate from D-erythrose 4-phosphate and phosphoenolpyruvate: step 4/7. Involved in the biosynthesis of the chorismate, which leads to the biosynthesis of aromatic amino acids. Catalyzes the reversible NADPH linked reduction of 3-dehydroshikimate (DHSA) to yield shikimate (SA). The polypeptide is Shikimate dehydrogenase (NADP(+)) (Sulfolobus acidocaldarius (strain ATCC 33909 / DSM 639 / JCM 8929 / NBRC 15157 / NCIMB 11770)).